The sequence spans 228 residues: tRNA (guanine-N(1)-)-methyltransferase (228 aa).

S-adenosyl-L-methionine contacts are provided by residues glycine 111 and 130 to 135 (IGDFVL).

It belongs to the RNA methyltransferase TrmD family. As to quaternary structure, homodimer.

The protein localises to the cytoplasm. The enzyme catalyses guanosine(37) in tRNA + S-adenosyl-L-methionine = N(1)-methylguanosine(37) in tRNA + S-adenosyl-L-homocysteine + H(+). Its function is as follows. Specifically methylates guanosine-37 in various tRNAs. This chain is tRNA (guanine-N(1)-)-methyltransferase, found in Ureaplasma parvum serovar 3 (strain ATCC 27815 / 27 / NCTC 11736).